The sequence spans 862 residues: Interleukin-12 receptor subunit beta-2 (862 aa).

The signal sequence occupies residues Met1–Ala23. At Lys24 to Asn622 the chain is on the extracellular side. Residues Asn48, Asn129, Asn166, Asn195, and Asn271 are each glycosylated (N-linked (GlcNAc...) asparagine). Fibronectin type-III domains are found at residues Gln126–Ile221, Pro226–Glu319, Glu320–Ala419, Ala423–Ala520, and Pro521–Lys620. The WSXWS motif signature appears at Trp305–Ser309. N-linked (GlcNAc...) asparagine glycosylation is found at Asn347, Asn376, and Asn480. Residues Trp623 to Thr643 form a helical membrane-spanning segment. The Cytoplasmic portion of the chain corresponds to His644–Leu862. A Box 1 motif motif is present at residues Cys662–Ala670. The tract at residues Asn725–Ala755 is disordered. Basic and acidic residues predominate over residues Gln728–Met744. The interval Thr796–Leu801 is required for STAT4 binding. Tyr800 carries the phosphotyrosine modification.

Belongs to the type I cytokine receptor family. Type 2 subfamily. Heterodimer/heterooligomer; disulfide-linked. The functional high affinity IL12 receptor is composed of I12RB1 and IL12RB2. Il12RB2 binds JAK2 (via its N-terminal) through a membrane-proximal region of the cytoplasmic domain. Interaction, in vitro and in vivo, with SOCS3 (via its SH2 domain) inhibits the STAT4-mediated activation. Binds STAT4 through a membrane-distal C-terminal region. On IL12 binding, phosphorylated on C-terminal tyrosine residues by JAK2. Phosphorylation on Tyr-800 is required for STAT4 binding and activation, and for SOCS3 binding. Isoform 2 is expressed at similar levels in both naive and activated T-cells.

The protein localises to the membrane. Functionally, receptor for interleukin-12. This subunit is the signaling component coupling to the JAK2/STAT4 pathway. Promotes the proliferation of T-cells as well as NK cells. Induces the promotion of T-cells towards the Th1 phenotype by strongly enhancing IFN-gamma production. This Homo sapiens (Human) protein is Interleukin-12 receptor subunit beta-2 (IL12RB2).